The sequence spans 230 residues: Ribose-5-phosphate isomerase A (230 aa).

Substrate-binding positions include 29–32 (TGST), 85–88 (DGAD), and 98–101 (KGGG). The Proton acceptor role is filled by Glu-107. Lys-125 is a substrate binding site.

The protein belongs to the ribose 5-phosphate isomerase family. Homodimer.

The catalysed reaction is aldehydo-D-ribose 5-phosphate = D-ribulose 5-phosphate. The protein operates within carbohydrate degradation; pentose phosphate pathway; D-ribose 5-phosphate from D-ribulose 5-phosphate (non-oxidative stage): step 1/1. In terms of biological role, catalyzes the reversible conversion of ribose-5-phosphate to ribulose 5-phosphate. The sequence is that of Ribose-5-phosphate isomerase A from Staphylococcus epidermidis (strain ATCC 35984 / DSM 28319 / BCRC 17069 / CCUG 31568 / BM 3577 / RP62A).